The sequence spans 119 residues: Small ribosomal subunit protein uS10 (119 aa).

An N-acetylalanine modification is found at A2. K4 participates in a covalent cross-link: Glycyl lysine isopeptide (Lys-Gly) (interchain with G-Cter in ubiquitin). Residue K8 is modified to N6-succinyllysine; alternate. K8 is covalently cross-linked (Glycyl lysine isopeptide (Lys-Gly) (interchain with G-Cter in ubiquitin); alternate). T9 carries the post-translational modification Phosphothreonine. Residues K34 and K75 each carry the N6-acetyllysine modification. S93 carries the post-translational modification Phosphoserine.

The protein belongs to the universal ribosomal protein uS10 family. Component of the 40S small ribosomal subunit. Post-translationally, polyubiquitinated by ZNF598 via 'Lys-63'-linked ubiquitin chains when a ribosome has stalled, initiating the ribosome quality control (RQC) pathway to degrade the potentially detrimental aberrant nascent polypeptide. Deubiquitinated by OTUD3 and USP21, antagonizing ZNF598 activity. In terms of processing, ufmylated by UFL1.

The protein resides in the cytoplasm. Its function is as follows. Component of the small ribosomal subunit. The ribosome is a large ribonucleoprotein complex responsible for the synthesis of proteins in the cell. This chain is Small ribosomal subunit protein uS10 (RPS20), found in Pongo abelii (Sumatran orangutan).